A 373-amino-acid polypeptide reads, in one-letter code: 3 beta-hydroxysteroid dehydrogenase/Delta 5--&gt;4-isomerase type 2 (373 aa).

The active-site Proton acceptor is Tyr-155. Residue Lys-159 coordinates NAD(+). A helical membrane pass occupies residues 288–308 (VPLLYWLAFLLETVSFLLSPI).

This sequence belongs to the 3-beta-HSD family. In terms of tissue distribution, liver and kidney.

The protein localises to the endoplasmic reticulum membrane. Its subcellular location is the mitochondrion membrane. It carries out the reaction a 3beta-hydroxy-Delta(5)-steroid + NAD(+) = a 3-oxo-Delta(5)-steroid + NADH + H(+). It catalyses the reaction a 3-oxo-Delta(5)-steroid = a 3-oxo-Delta(4)-steroid. The catalysed reaction is pregnenolone + NAD(+) = pregn-5-ene-3,20-dione + NADH + H(+). The enzyme catalyses pregn-5-ene-3,20-dione = progesterone. It carries out the reaction 3beta-hydroxyandrost-5-en-17-one + NAD(+) = androst-5-ene-3,17-dione + NADH + H(+). It catalyses the reaction androst-5-ene-3,17-dione = androst-4-ene-3,17-dione. It functions in the pathway lipid metabolism; steroid biosynthesis. 3-beta-HSD is a bifunctional enzyme, that catalyzes the oxidative conversion of Delta(5)-ene-3-beta-hydroxy steroid, and the oxidative conversion of ketosteroids. The 3-beta-HSD enzymatic system plays a crucial role in the biosynthesis of all classes of hormonal steroids. The protein is 3 beta-hydroxysteroid dehydrogenase/Delta 5--&gt;4-isomerase type 2 of Mus musculus (Mouse).